A 429-amino-acid polypeptide reads, in one-letter code: Formate-dependent phosphoribosylglycinamide formyltransferase (429 aa).

N(1)-(5-phospho-beta-D-ribosyl)glycinamide-binding positions include 26–27 and glutamate 86; that span reads EL. Residues arginine 118, lysine 159, 199 to 202, and glutamate 207 contribute to the ATP site; that span reads EEHI. An ATP-grasp domain is found at 123–319; that stretch reads ETLVKEAKVP…EFGLHLRAVL (197 aa). Residues glutamate 276 and glutamate 288 each contribute to the Mg(2+) site. N(1)-(5-phospho-beta-D-ribosyl)glycinamide contacts are provided by residues aspartate 295, lysine 375, and 382–383; that span reads RR.

It belongs to the PurK/PurT family. In terms of assembly, homodimer.

It carries out the reaction N(1)-(5-phospho-beta-D-ribosyl)glycinamide + formate + ATP = N(2)-formyl-N(1)-(5-phospho-beta-D-ribosyl)glycinamide + ADP + phosphate + H(+). The protein operates within purine metabolism; IMP biosynthesis via de novo pathway; N(2)-formyl-N(1)-(5-phospho-D-ribosyl)glycinamide from N(1)-(5-phospho-D-ribosyl)glycinamide (formate route): step 1/1. In terms of biological role, involved in the de novo purine biosynthesis. Catalyzes the transfer of formate to 5-phospho-ribosyl-glycinamide (GAR), producing 5-phospho-ribosyl-N-formylglycinamide (FGAR). Formate is provided by PurU via hydrolysis of 10-formyl-tetrahydrofolate. The polypeptide is Formate-dependent phosphoribosylglycinamide formyltransferase (Pyrococcus furiosus (strain ATCC 43587 / DSM 3638 / JCM 8422 / Vc1)).